We begin with the raw amino-acid sequence, 876 residues long: Alanine--tRNA ligase (876 aa).

Lys74 bears the N6-acetyllysine mark. 4 residues coordinate Zn(2+): His564, His568, Cys666, and His670.

It belongs to the class-II aminoacyl-tRNA synthetase family. As to quaternary structure, homotetramer. Zn(2+) is required as a cofactor.

Its subcellular location is the cytoplasm. The enzyme catalyses tRNA(Ala) + L-alanine + ATP = L-alanyl-tRNA(Ala) + AMP + diphosphate. Functionally, catalyzes the attachment of alanine to tRNA(Ala) in a two-step reaction: alanine is first activated by ATP to form Ala-AMP and then transferred to the acceptor end of tRNA(Ala). Also edits incorrectly charged Ser-tRNA(Ala) and Gly-tRNA(Ala) via its editing domain. This is Alanine--tRNA ligase from Escherichia coli (strain ATCC 8739 / DSM 1576 / NBRC 3972 / NCIMB 8545 / WDCM 00012 / Crooks).